A 193-amino-acid chain; its full sequence is dTTP/UTP pyrophosphatase (193 aa).

Residue Asp71 is the Proton acceptor of the active site.

It belongs to the Maf family. YhdE subfamily. A divalent metal cation is required as a cofactor.

It localises to the cytoplasm. The catalysed reaction is dTTP + H2O = dTMP + diphosphate + H(+). It catalyses the reaction UTP + H2O = UMP + diphosphate + H(+). Functionally, nucleoside triphosphate pyrophosphatase that hydrolyzes dTTP and UTP. May have a dual role in cell division arrest and in preventing the incorporation of modified nucleotides into cellular nucleic acids. The protein is dTTP/UTP pyrophosphatase of Dictyoglomus thermophilum (strain ATCC 35947 / DSM 3960 / H-6-12).